A 178-amino-acid chain; its full sequence is CASP-like protein 2U3 (178 aa).

Topologically, residues 1-4 are cytoplasmic; the sequence is MACR. The chain crosses the membrane as a helical span at residues 5-25; it reads VMEVLLRVLAILLSIAGALVM. Residues 26 to 52 lie on the Extracellular side of the membrane; that stretch reads AKDKQDTFVMLGTVPVPLYARHSYVEA. A helical membrane pass occupies residues 53-73; the sequence is FVFLVYANGIVAIYCFIAVLL. Topologically, residues 74–80 are cytoplasmic; the sequence is SLLAKSR. Residues 81–101 form a helical membrane-spanning segment; sequence VLAGLLFFMDQALAYLLLAAA. At 102 to 132 the chain is on the extracellular side; it reads AASTEVAYIAKRGEKKLVWGEVCSNFEHFCN. The helical transmembrane segment at 133 to 153 threads the bilayer; the sequence is LVGVSLVLTFLSVLVLVTLAI. The Cytoplasmic segment spans residues 154-178; the sequence is LSGKRLFGHPPLCAPPSTPPVHQGV.

Belongs to the Casparian strip membrane proteins (CASP) family. Homodimer and heterodimers.

It localises to the cell membrane. The sequence is that of CASP-like protein 2U3 from Pteridium aquilinum subsp. aquilinum (Bracken fern).